A 528-amino-acid polypeptide reads, in one-letter code: DNA damage-binding protein cmr1 (528 aa).

Disordered stretches follow at residues 32 to 98 (AQSS…QYEA) and 217 to 243 (DASQEKPTSAVKQEDDEEDAEDDDPDP). Residues 52-62 (KPKKKPPPKKV) show a composition bias toward basic residues. One copy of the WD 1 repeat lies at 185 to 226 (LTPERIYTMTFHPSEAKPLIFAGDKMGNLGVLDASQEKPTSA). Over residues 230–242 (EDDEEDAEDDDPD) the composition is skewed to acidic residues. WD repeat units follow at residues 250 to 290 (PHTR…SVEK), 297 to 337 (SDDI…RSAV), 342 to 382 (LSEK…HDDP), 389 to 428 (VSRLSVSHAAFNSAGQIATSSYDDTLKIYDFGSKGIAAWE), 451 to 494 (GRWV…LAQL), and 497 to 528 (DGITAVPAVAVFHCSTNWIAGGTASGKICLWM).

Belongs to the WD repeat DDB2/WDR76 family.

Functionally, DNA-binding protein that binds to both single- and double-stranded DNA. Binds preferentially to UV-damaged DNA. May be involved in DNA-metabolic processes. The polypeptide is DNA damage-binding protein cmr1 (Aspergillus fumigatus (strain CBS 144.89 / FGSC A1163 / CEA10) (Neosartorya fumigata)).